Reading from the N-terminus, the 242-residue chain is Octanoyltransferase (242 aa).

A BPL/LPL catalytic domain is found at 31 to 206 (SQTTDEIWFL…LFLKNFGYNQ (176 aa)). Substrate contacts are provided by residues 70-77 (RGGQVTYH), 137-139 (SIG), and 150-152 (GLA). Cysteine 168 functions as the Acyl-thioester intermediate in the catalytic mechanism.

The protein belongs to the LipB family.

The protein localises to the cytoplasm. The enzyme catalyses octanoyl-[ACP] + L-lysyl-[protein] = N(6)-octanoyl-L-lysyl-[protein] + holo-[ACP] + H(+). Its pathway is protein modification; protein lipoylation via endogenous pathway; protein N(6)-(lipoyl)lysine from octanoyl-[acyl-carrier-protein]: step 1/2. In terms of biological role, catalyzes the transfer of endogenously produced octanoic acid from octanoyl-acyl-carrier-protein onto the lipoyl domains of lipoate-dependent enzymes. Lipoyl-ACP can also act as a substrate although octanoyl-ACP is likely to be the physiological substrate. The polypeptide is Octanoyltransferase (Coxiella burnetii (strain CbuK_Q154) (Coxiella burnetii (strain Q154))).